A 552-amino-acid polypeptide reads, in one-letter code: ATP synthase subunit alpha (552 aa).

Residue 173 to 180 (GDRQTGKT) participates in ATP binding. Residues 516–552 (DGKPLVNEPAPSPLDPGLVRQESIPVHRPAARKDDEG) form a disordered region.

Belongs to the ATPase alpha/beta chains family. As to quaternary structure, F-type ATPases have 2 components, CF(1) - the catalytic core - and CF(0) - the membrane proton channel. CF(1) has five subunits: alpha(3), beta(3), gamma(1), delta(1), epsilon(1). CF(0) has three main subunits: a(1), b(2) and c(9-12). The alpha and beta chains form an alternating ring which encloses part of the gamma chain. CF(1) is attached to CF(0) by a central stalk formed by the gamma and epsilon chains, while a peripheral stalk is formed by the delta and b chains.

Its subcellular location is the cell membrane. It catalyses the reaction ATP + H2O + 4 H(+)(in) = ADP + phosphate + 5 H(+)(out). Its function is as follows. Produces ATP from ADP in the presence of a proton gradient across the membrane. The alpha chain is a regulatory subunit. The protein is ATP synthase subunit alpha of Frankia casuarinae (strain DSM 45818 / CECT 9043 / HFP020203 / CcI3).